Here is a 238-residue protein sequence, read N- to C-terminus: Ribonuclease PH (238 aa).

Phosphate is bound by residues Arg-86 and 124-126 (GTR).

This sequence belongs to the RNase PH family. As to quaternary structure, homohexameric ring arranged as a trimer of dimers.

It carries out the reaction tRNA(n+1) + phosphate = tRNA(n) + a ribonucleoside 5'-diphosphate. Phosphorolytic 3'-5' exoribonuclease that plays an important role in tRNA 3'-end maturation. Removes nucleotide residues following the 3'-CCA terminus of tRNAs; can also add nucleotides to the ends of RNA molecules by using nucleoside diphosphates as substrates, but this may not be physiologically important. Probably plays a role in initiation of 16S rRNA degradation (leading to ribosome degradation) during starvation. This is Ribonuclease PH from Vibrio vulnificus (strain CMCP6).